A 464-amino-acid polypeptide reads, in one-letter code: Dihydrolipoyl dehydrogenase (464 aa).

FAD-binding positions include 36 to 44, lysine 53, and alanine 119; that span reads EGAALGGTC. A disulfide bridge connects residues cysteine 44 and cysteine 49. NAD(+) is bound by residues 184–188, glutamate 207, and 269–272; these read GGGYI and AVGR. Positions 311 and 319 each coordinate FAD. Histidine 443 functions as the Proton acceptor in the catalytic mechanism.

It belongs to the class-I pyridine nucleotide-disulfide oxidoreductase family. Homodimer. Requires FAD as cofactor.

The protein resides in the cytoplasm. It catalyses the reaction N(6)-[(R)-dihydrolipoyl]-L-lysyl-[protein] + NAD(+) = N(6)-[(R)-lipoyl]-L-lysyl-[protein] + NADH + H(+). In terms of biological role, the branched-chain alpha-keto dehydrogenase complex catalyzes the overall conversion of alpha-keto acids to acyl-CoA and CO(2). It contains multiple copies of 3 enzymatic components: branched-chain alpha-keto acid decarboxylase (E1), lipoamide acyltransferase (E2) and lipoamide dehydrogenase (E3). The chain is Dihydrolipoyl dehydrogenase from Pseudomonas aeruginosa (strain ATCC 15692 / DSM 22644 / CIP 104116 / JCM 14847 / LMG 12228 / 1C / PRS 101 / PAO1).